Reading from the N-terminus, the 61-residue chain is Small ribosomal subunit protein uS14 (61 aa).

Zn(2+) is bound by residues Cys24, Cys27, Cys40, and Cys43.

Belongs to the universal ribosomal protein uS14 family. Zinc-binding uS14 subfamily. Part of the 30S ribosomal subunit. Contacts proteins S3 and S10. It depends on Zn(2+) as a cofactor.

In terms of biological role, binds 16S rRNA, required for the assembly of 30S particles and may also be responsible for determining the conformation of the 16S rRNA at the A site. This chain is Small ribosomal subunit protein uS14, found in Mycobacterium avium (strain 104).